A 236-amino-acid polypeptide reads, in one-letter code: Small ribosomal subunit protein uS2c (236 aa).

The protein belongs to the universal ribosomal protein uS2 family.

It is found in the plastid. Its subcellular location is the chloroplast. This is Small ribosomal subunit protein uS2c (rps2) from Vitis vinifera (Grape).